We begin with the raw amino-acid sequence, 463 residues long: UDP-N-acetylmuramoylalanine--D-glutamate ligase (463 aa).

Residue 116–122 (GTNGKTT) participates in ATP binding.

The protein belongs to the MurCDEF family.

It is found in the cytoplasm. It catalyses the reaction UDP-N-acetyl-alpha-D-muramoyl-L-alanine + D-glutamate + ATP = UDP-N-acetyl-alpha-D-muramoyl-L-alanyl-D-glutamate + ADP + phosphate + H(+). Its pathway is cell wall biogenesis; peptidoglycan biosynthesis. In terms of biological role, cell wall formation. Catalyzes the addition of glutamate to the nucleotide precursor UDP-N-acetylmuramoyl-L-alanine (UMA). The sequence is that of UDP-N-acetylmuramoylalanine--D-glutamate ligase from Synechococcus elongatus (strain ATCC 33912 / PCC 7942 / FACHB-805) (Anacystis nidulans R2).